A 414-amino-acid polypeptide reads, in one-letter code: uncharacterized protein (414 aa).

Residues 1–18 form the signal peptide; that stretch reads MLKRLMLASAILPVVSFA.

This is an uncharacterized protein from Aquifex aeolicus (strain VF5).